A 221-amino-acid polypeptide reads, in one-letter code: Peptide methionine sulfoxide reductase MsrA (221 aa).

The active site involves Cys-54.

It belongs to the MsrA Met sulfoxide reductase family.

The enzyme catalyses L-methionyl-[protein] + [thioredoxin]-disulfide + H2O = L-methionyl-(S)-S-oxide-[protein] + [thioredoxin]-dithiol. It carries out the reaction [thioredoxin]-disulfide + L-methionine + H2O = L-methionine (S)-S-oxide + [thioredoxin]-dithiol. Its function is as follows. Has an important function as a repair enzyme for proteins that have been inactivated by oxidation. Catalyzes the reversible oxidation-reduction of methionine sulfoxide in proteins to methionine. The chain is Peptide methionine sulfoxide reductase MsrA from Methylobacterium nodulans (strain LMG 21967 / CNCM I-2342 / ORS 2060).